A 108-amino-acid polypeptide reads, in one-letter code: Thiosulfate sulfurtransferase GlpE (108 aa).

In terms of domain architecture, Rhodanese spans 18 to 106 (ENEGATLADI…WERSGLPIET (89 aa)). C66 (cysteine persulfide intermediate) is an active-site residue.

The protein belongs to the GlpE family.

It is found in the cytoplasm. The enzyme catalyses thiosulfate + hydrogen cyanide = thiocyanate + sulfite + 2 H(+). It carries out the reaction thiosulfate + [thioredoxin]-dithiol = [thioredoxin]-disulfide + hydrogen sulfide + sulfite + 2 H(+). In terms of biological role, transferase that catalyzes the transfer of sulfur from thiosulfate to thiophilic acceptors such as cyanide or dithiols. May function in a CysM-independent thiosulfate assimilation pathway by catalyzing the conversion of thiosulfate to sulfite, which can then be used for L-cysteine biosynthesis. In Actinobacillus pleuropneumoniae serotype 7 (strain AP76), this protein is Thiosulfate sulfurtransferase GlpE.